Here is a 244-residue protein sequence, read N- to C-terminus: ATP synthase subunit a (244 aa).

7 consecutive transmembrane segments (helical) span residues 20–40 (FFDVSITTITVYLGLLMVIVI), 81–101 (GILFFPFIMSLFLFVLTLNVM), 113–133 (QLLVTFTLAITIMIGITIWGF), 140–160 (FLNIFVPSGIEPWLLPLLVFI), 176–196 (LFANMLAGHLLIHIIGVAAIY), 202–222 (FIGILPWICVIAFMFLELGIA), and 223–243 (FLQAYVFVLLTLIYIANIINL).

This sequence belongs to the ATPase A chain family. In terms of assembly, F-type ATPases have 2 components, CF(1) - the catalytic core - and CF(0) - the membrane proton channel. CF(1) has five subunits: alpha(3), beta(3), gamma(1), delta(1), epsilon(1). CF(0) has three main subunits: a, b and c.

It is found in the mitochondrion inner membrane. Mitochondrial membrane ATP synthase (F(1)F(0) ATP synthase or Complex V) produces ATP from ADP in the presence of a proton gradient across the membrane which is generated by electron transport complexes of the respiratory chain. F-type ATPases consist of two structural domains, F(1) - containing the extramembraneous catalytic core and F(0) - containing the membrane proton channel, linked together by a central stalk and a peripheral stalk. During catalysis, ATP synthesis in the catalytic domain of F(1) is coupled via a rotary mechanism of the central stalk subunits to proton translocation. Key component of the proton channel; it may play a direct role in the translocation of protons across the membrane. This is ATP synthase subunit a (atp6) from Dictyostelium citrinum (Slime mold).